The sequence spans 258 residues: MIAISAVSSALLFSLLCEASTVVLLNSTDSSPPTNNFTDIEAALKAQLDSADIPKARRKRYISQNDMIAILDYHNQVRGKVFPPAANMEYMVWDENLAKSAEAWAATCIWDHGPSYLLRFLGQNLSVRTGRYRSILQLVKPWYDEVKDYAFPYPQDCNPRCPMRCFGPMCTHYTQMVWATSNRIGCAIHTCQNMNVWGSVWRRAVYLVCNYAPKGNWIGEAPYKVGVPCSSCPPSYGGSCTDNLCFPGVTSNYLYWFK.

A signal peptide spans 1 to 19 (MIAISAVSSALLFSLLCEA). Positions 20-60 (STVVLLNSTDSSPPTNNFTDIEAALKAQLDSADIPKARRKR) are excised as a propeptide. Asn26, Asn36, and Asn124 each carry an N-linked (GlcNAc...) asparagine glycan. The SCP domain occupies 71-211 (LDYHNQVRGK…RRAVYLVCNY (141 aa)).

The protein belongs to the CRISP family. N-glycosylated. In terms of tissue distribution, weakly expressed. Expressed at low level in prostate, mammary gland, salivary gland and thyroid gland.

Its subcellular location is the secreted. In terms of biological role, serine protease inhibitor which displays weak inhibitory activity against trypsin. May play a role in facial patterning during embryonic development. This Homo sapiens (Human) protein is Peptidase inhibitor 15 (PI15).